Here is a 151-residue protein sequence, read N- to C-terminus: Transcriptional regulator MraZ (151 aa).

2 SpoVT-AbrB domains span residues 5 to 52 (ANAI…PLDE) and 81 to 124 (AVDL…DEDA).

It belongs to the MraZ family. In terms of assembly, forms oligomers.

It is found in the cytoplasm. Its subcellular location is the nucleoid. This is Transcriptional regulator MraZ from Pseudomonas fluorescens (strain ATCC BAA-477 / NRRL B-23932 / Pf-5).